Reading from the N-terminus, the 864-residue chain is N-alpha-acetyltransferase 16, NatA auxiliary subunit (864 aa).

TPR repeat units lie at residues 46 to 79, 80 to 113, 148 to 184, 224 to 257, 374 to 407, 409 to 441, and 485 to 518; these read GETL…DVKS, HVCW…DKDN, RASW…PPNK, LLVE…NAEN, LWVQ…TPTL, ELFY…DTAD, and MWFQ…FFEI. A disordered region spans residues 603-638; the sequence is QKKAKLEEERKHAERERQQKNQKKKRDEEEEEASGL. A compositionally biased stretch (basic and acidic residues) spans 606-621; the sequence is AKLEEERKHAERERQQ.

In terms of assembly, component of the N-terminal acetyltransferase A (NatA) complex composed of NAA10 and NAA16.

In terms of biological role, auxillary subunit of the N-terminal acetyltransferase A (NatA) complex which displays alpha (N-terminal) acetyltransferase activity. In Homo sapiens (Human), this protein is N-alpha-acetyltransferase 16, NatA auxiliary subunit (NAA16).